The chain runs to 335 residues: uncharacterized protein (335 aa).

4 helical membrane passes run 104–124 (FKKVVIYMIITFLALLFMGLL), 128–148 (LLQGFVNGLIGAGIILVLSLF), 280–300 (LAFGVGLILPFTGMILSTMIG), and 310–330 (TINLLLLKIGPLLTLIFGIFV).

The protein localises to the cell membrane. This is an uncharacterized protein from Methanocaldococcus jannaschii (strain ATCC 43067 / DSM 2661 / JAL-1 / JCM 10045 / NBRC 100440) (Methanococcus jannaschii).